Consider the following 374-residue polypeptide: Anhydro-N-acetylmuramic acid kinase (374 aa).

Position 12–19 (12–19) interacts with ATP; it reads GTSLDGVD.

The protein belongs to the anhydro-N-acetylmuramic acid kinase family.

It catalyses the reaction 1,6-anhydro-N-acetyl-beta-muramate + ATP + H2O = N-acetyl-D-muramate 6-phosphate + ADP + H(+). It participates in amino-sugar metabolism; 1,6-anhydro-N-acetylmuramate degradation. It functions in the pathway cell wall biogenesis; peptidoglycan recycling. In terms of biological role, catalyzes the specific phosphorylation of 1,6-anhydro-N-acetylmuramic acid (anhMurNAc) with the simultaneous cleavage of the 1,6-anhydro ring, generating MurNAc-6-P. Is required for the utilization of anhMurNAc either imported from the medium or derived from its own cell wall murein, and thus plays a role in cell wall recycling. The polypeptide is Anhydro-N-acetylmuramic acid kinase (Enterobacter sp. (strain 638)).